A 139-amino-acid polypeptide reads, in one-letter code: Holo-[acyl-carrier-protein] synthase (139 aa).

Residues Asp-8 and Glu-61 each contribute to the Mg(2+) site.

It belongs to the P-Pant transferase superfamily. AcpS family. The cofactor is Mg(2+).

Its subcellular location is the cytoplasm. The catalysed reaction is apo-[ACP] + CoA = holo-[ACP] + adenosine 3',5'-bisphosphate + H(+). In terms of biological role, transfers the 4'-phosphopantetheine moiety from coenzyme A to a Ser of acyl-carrier-protein. The sequence is that of Holo-[acyl-carrier-protein] synthase from Bradyrhizobium sp. (strain BTAi1 / ATCC BAA-1182).